Reading from the N-terminus, the 234-residue chain is Thymidylate kinase (234 aa).

20–27 (GIDASGKT) contacts ATP.

Belongs to the thymidylate kinase family.

The catalysed reaction is dTMP + ATP = dTDP + ADP. Functionally, phosphorylation of dTMP to form dTDP in both de novo and salvage pathways of dTTP synthesis. The polypeptide is Thymidylate kinase (Mycoplasmopsis pulmonis (strain UAB CTIP) (Mycoplasma pulmonis)).